Here is a 365-residue protein sequence, read N- to C-terminus: Putative F-box protein At1g31000 (365 aa).

Positions 15–62 (NDSDSVRIDIVIEIVKRLPLKDVSRFLLVSKLWSEIIRSPYFIRSFPF) constitute an F-box domain.

The chain is Putative F-box protein At1g31000 from Arabidopsis thaliana (Mouse-ear cress).